The chain runs to 147 residues: Basic phospholipase A2 beta-bungarotoxin A1 chain (147 aa).

Positions 1–19 (MNPAHLLVLSAVCVSLLGA) are cleaved as a signal peptide. Residues 20-27 (ANIPPHPL) constitute a propeptide that is removed on maturation. Disulfide bonds link Cys54–Cys146, Cys56–Cys72, Cys71–Cys127, Cys78–Cys120, Cys88–Cys113, and Cys106–Cys118. 3 residues coordinate Ca(2+): Tyr55, Gly57, and Gly59. His75 is an active-site residue. Asp76 serves as a coordination point for Ca(2+). Residue Asp121 is part of the active site.

It belongs to the phospholipase A2 family. Group I subfamily. D49 sub-subfamily. Heterodimer; disulfide-linked. The A chains have phospholipase A2 activity and the B chains show homology with the basic protease inhibitors. The A1 chain is found in beta-1 and beta-2 bungarotoxins. It depends on Ca(2+) as a cofactor. In terms of tissue distribution, expressed by the venom gland.

The protein localises to the secreted. It catalyses the reaction a 1,2-diacyl-sn-glycero-3-phosphocholine + H2O = a 1-acyl-sn-glycero-3-phosphocholine + a fatty acid + H(+). In terms of biological role, snake venom phospholipase A2 (PLA2) that inhibits neuromuscular transmission by blocking acetylcholine release from the nerve termini. PLA2 catalyzes the calcium-dependent hydrolysis of the 2-acyl groups in 3-sn-phosphoglycerides. This Bungarus multicinctus (Many-banded krait) protein is Basic phospholipase A2 beta-bungarotoxin A1 chain.